We begin with the raw amino-acid sequence, 460 residues long: Ribulose bisphosphate carboxylase large chain (460 aa).

Lysine 4 carries the N6,N6,N6-trimethyllysine modification. Substrate is bound by residues asparagine 113 and threonine 163. The Proton acceptor role is filled by lysine 165. Lysine 167 provides a ligand contact to substrate. Mg(2+)-binding residues include lysine 191, aspartate 193, and glutamate 194. Lysine 191 is subject to N6-carboxylysine. Histidine 284 functions as the Proton acceptor in the catalytic mechanism. Residues arginine 285, histidine 317, and serine 369 each coordinate substrate.

This sequence belongs to the RuBisCO large chain family. Type I subfamily. As to quaternary structure, heterohexadecamer of 8 large chains and 8 small chains. Mg(2+) serves as cofactor.

Its subcellular location is the plastid. The protein resides in the chloroplast. The catalysed reaction is 2 (2R)-3-phosphoglycerate + 2 H(+) = D-ribulose 1,5-bisphosphate + CO2 + H2O. It carries out the reaction D-ribulose 1,5-bisphosphate + O2 = 2-phosphoglycolate + (2R)-3-phosphoglycerate + 2 H(+). Functionally, ruBisCO catalyzes two reactions: the carboxylation of D-ribulose 1,5-bisphosphate, the primary event in carbon dioxide fixation, as well as the oxidative fragmentation of the pentose substrate in the photorespiration process. Both reactions occur simultaneously and in competition at the same active site. The chain is Ribulose bisphosphate carboxylase large chain from Cunninghamia lanceolata (China fir).